Here is a 335-residue protein sequence, read N- to C-terminus: Glutamyl-tRNA reductase (335 aa).

Residues 60 to 63, serine 110, 115 to 117, and glutamine 121 each bind substrate; these read TCHR and ETE. Cysteine 61 (nucleophile) is an active-site residue. 189 to 194 is an NADP(+) binding site; the sequence is GYSEIN.

Belongs to the glutamyl-tRNA reductase family. In terms of assembly, homodimer.

It catalyses the reaction (S)-4-amino-5-oxopentanoate + tRNA(Glu) + NADP(+) = L-glutamyl-tRNA(Glu) + NADPH + H(+). It participates in porphyrin-containing compound metabolism; protoporphyrin-IX biosynthesis; 5-aminolevulinate from L-glutamyl-tRNA(Glu): step 1/2. Functionally, catalyzes the NADPH-dependent reduction of glutamyl-tRNA(Glu) to glutamate 1-semialdehyde (GSA). This Chlamydia trachomatis serovar A (strain ATCC VR-571B / DSM 19440 / HAR-13) protein is Glutamyl-tRNA reductase.